Reading from the N-terminus, the 86-residue chain is Small ribosomal subunit protein uS17 (86 aa).

It belongs to the universal ribosomal protein uS17 family. In terms of assembly, part of the 30S ribosomal subunit.

In terms of biological role, one of the primary rRNA binding proteins, it binds specifically to the 5'-end of 16S ribosomal RNA. The chain is Small ribosomal subunit protein uS17 from Caldicellulosiruptor bescii (strain ATCC BAA-1888 / DSM 6725 / KCTC 15123 / Z-1320) (Anaerocellum thermophilum).